The primary structure comprises 2641 residues: Inverse autotransporter adhesin YeeJ (2641 aa).

The first 26 residues, 1 to 26 (MGIKLRRLTAGICLVTQLAFPMAAAA), serve as a signal peptide directing secretion. The 49-residue stretch at 50-98 (VPYILGALESAQSVAERFGISVAELRKLNQFRTFARGFDNVRQGDELDV) folds into the LysM domain. Residues 99–118 (PAQVSEKKLTPPPGNSSDNL) are disordered. Residues 125–400 (TSQQIGSLLA…SRYDLVDRNN (276 aa)) are inverse autotransporter. Positions 513–605 (QKDSSVSLST…GVDAAKAPAV (93 aa)) are invasin 3 domain. 17 Big-1 domains span residues 617–711 (HSSI…AGFI), 721–815 (IATL…VSFV), 822–913 (QVDL…VNFI), 920–1017 (ALTL…MTFV), 1024–1116 (VVVL…VNIA), 1123–1220 (QVTL…VTFV), 1227–1319 (VVVL…VNIA), 1326–1423 (QVTL…VTFV), 1430–1523 (QVVL…VHFI), 1531–1633 (IIEL…SINV), 1641–1734 (HLTL…VTYV), 1741–1837 (EISL…VNFT), 1844–1941 (QVNL…VTLI), 1948–2032 (KLTS…PTEV), 2048–2139 (FTSL…LEAI), 2142–2236 (KLTL…VKVT), and 2244–2336 (VASF…ITLV). A C-type lectin domain region spans residues 2538-2641 (KSWWVNAGDA…FAHATCYKNL (104 aa)).

Belongs to the intimin/invasin family.

The protein localises to the cell outer membrane. A probable inverse autotransporter, it may be involved in biofilm formation and cell adhesion. May bind peptidoglycan via its LysM domain. Upon overexpression shows increased mature biofilm formation. The chain is Inverse autotransporter adhesin YeeJ from Escherichia coli O17:K52:H18 (strain UMN026 / ExPEC).